Consider the following 308-residue polypeptide: Acetyl-coenzyme A carboxylase carboxyl transferase subunit beta (308 aa).

The 270-residue stretch at 25 to 294 folds into the CoA carboxyltransferase N-terminal domain; the sequence is VWTKCTSCEQ…PLVVSVNDSP (270 aa). The Zn(2+) site is built by C29, C32, C48, and C51. A C4-type zinc finger spans residues 29 to 51; that stretch reads CTSCEQVLYHAELERNLEVCPKC.

This sequence belongs to the AccD/PCCB family. Acetyl-CoA carboxylase is a heterohexamer composed of biotin carboxyl carrier protein (AccB), biotin carboxylase (AccC) and two subunits each of ACCase subunit alpha (AccA) and ACCase subunit beta (AccD). The cofactor is Zn(2+).

The protein localises to the cytoplasm. It carries out the reaction N(6)-carboxybiotinyl-L-lysyl-[protein] + acetyl-CoA = N(6)-biotinyl-L-lysyl-[protein] + malonyl-CoA. It participates in lipid metabolism; malonyl-CoA biosynthesis; malonyl-CoA from acetyl-CoA: step 1/1. Its function is as follows. Component of the acetyl coenzyme A carboxylase (ACC) complex. Biotin carboxylase (BC) catalyzes the carboxylation of biotin on its carrier protein (BCCP) and then the CO(2) group is transferred by the transcarboxylase to acetyl-CoA to form malonyl-CoA. In Vibrio vulnificus (strain CMCP6), this protein is Acetyl-coenzyme A carboxylase carboxyl transferase subunit beta.